We begin with the raw amino-acid sequence, 414 residues long: NAC domain-containing protein 35 (414 aa).

The span at 1 to 21 shows a compositional bias: polar residues; the sequence is MAIVSSTTSIIPMSNQVNNNE. The interval 1 to 47 is disordered; it reads MAIVSSTTSIIPMSNQVNNNEKGIEDNDHRGGQESHVQNEDEADDHD. Residues 22–47 show a composition bias toward basic and acidic residues; the sequence is KGIEDNDHRGGQESHVQNEDEADDHD. In terms of domain architecture, NAC spans 51–198; sequence VMPGFRFHPT…EISLCRVYKR (148 aa). Residues 149–204 mediate DNA binding; that stretch reads IGLKKTLVFYSGKAPKGTRTSWIMNEYRLPHHETEKYQKAEISLCRVYKRPGVEDH. A disordered region spans residues 200–251; sequence GVEDHPSVPRSLSTRHHNHNSSTSSRLALRQQQHHSSSSNHSDNNLNNNNNI. Low complexity predominate over residues 233–251; the sequence is HHSSSSNHSDNNLNNNNNI.

In terms of tissue distribution, expressed in aerial organs in early stages of seedling development.

Its subcellular location is the nucleus. Transcription factor that acts as a floral repressor. Controls flowering time by negatively regulating CONSTANS (CO) expression in a GIGANTEA (GI)-independent manner. Regulates the plant cold response by positive regulation of the cold response genes COR15A and KIN1. May coordinate cold response and flowering time. This Arabidopsis thaliana (Mouse-ear cress) protein is NAC domain-containing protein 35.